Consider the following 1021-residue polypeptide: Peroxisomal ATPase PEX6 (1021 aa).

763–770 (GPPGTGKT) lines the ATP pocket.

The protein belongs to the AAA ATPase family. In terms of assembly, interacts with PEX1; forming the PEX1-PEX6 AAA ATPase complex, which is composed of a heterohexamer formed by a trimer of PEX1-PEX6 dimers.

The protein localises to the cytoplasm. It is found in the cytosol. It localises to the peroxisome membrane. It carries out the reaction ATP + H2O = ADP + phosphate + H(+). In terms of biological role, component of the PEX1-PEX6 AAA ATPase complex, a protein dislocase complex that mediates the ATP-dependent extraction of the PEX5 receptor from peroxisomal membranes, an essential step for PEX5 recycling. Specifically recognizes PEX5 monoubiquitinated at 'Cys-6', and pulls it out of the peroxisome lumen through the PEX2-PEX10-PEX12 retrotranslocation channel. Extraction by the PEX1-PEX6 AAA ATPase complex is accompanied by unfolding of the TPR repeats and release of bound cargo from PEX5. The polypeptide is Peroxisomal ATPase PEX6 (PEX6) (Eremothecium gossypii (strain ATCC 10895 / CBS 109.51 / FGSC 9923 / NRRL Y-1056) (Yeast)).